Here is a 203-residue protein sequence, read N- to C-terminus: Dephospho-CoA kinase (203 aa).

The DPCK domain maps to 4-203 (VIGITGGIAT…EEGYIQSESE (200 aa)). 12-17 (ATGKST) provides a ligand contact to ATP.

This sequence belongs to the CoaE family.

The protein localises to the cytoplasm. The catalysed reaction is 3'-dephospho-CoA + ATP = ADP + CoA + H(+). It functions in the pathway cofactor biosynthesis; coenzyme A biosynthesis; CoA from (R)-pantothenate: step 5/5. Catalyzes the phosphorylation of the 3'-hydroxyl group of dephosphocoenzyme A to form coenzyme A. This is Dephospho-CoA kinase from Staphylococcus epidermidis (strain ATCC 35984 / DSM 28319 / BCRC 17069 / CCUG 31568 / BM 3577 / RP62A).